A 172-amino-acid chain; its full sequence is MSLPNPADLIRQMAVDLRAHLARREITEPRFIGIRTGGVWVAQALQAELGDQSPLGTLDVSFYRDDFSQNGLHPQVRPSELPFEIEGQHLVLVDDVLMSGRTIRAALNELFDYGRPASVTLACLLDLDAGELPIRPNVLGATLSLAAHERVKLTGPTPLALERQDLAPASAL.

The PRPP-binding signature appears at 90–102; sequence LVLVDDVLMSGRT.

It belongs to the purine/pyrimidine phosphoribosyltransferase family. PyrR subfamily.

It carries out the reaction UMP + diphosphate = 5-phospho-alpha-D-ribose 1-diphosphate + uracil. Functionally, regulates the transcription of the pyrimidine nucleotide (pyr) operon in response to exogenous pyrimidines. Its function is as follows. Also displays a weak uracil phosphoribosyltransferase activity which is not physiologically significant. The chain is Bifunctional protein PyrR from Pseudomonas entomophila (strain L48).